Reading from the N-terminus, the 65-residue chain is Temporin-SN1 (65 aa).

A signal peptide spans 1–22; sequence MFTTKKSLLLLFFLGTINLSLC. A propeptide spans 23 to 44 (removed in mature form); that stretch reads QEERNAEEERRDGDDEGGVEVQ. The residue at position 65 (Lys65) is a Lysine amide.

The protein belongs to the frog skin active peptide (FSAP) family. Temporin subfamily. Expressed by the skin glands.

Its subcellular location is the secreted. In terms of biological role, antimicrobial peptide. Active against a variety of Gram-positive bacterial strains. Not active against Gram-negative bacteria and against fungi. Shows hemolytic activity against human erythrocytes. In Sylvirana spinulosa (Fine-spined frog), this protein is Temporin-SN1.